The chain runs to 925 residues: Translation initiation factor IF-2 (925 aa).

Disordered stretches follow at residues G52–P84 and A98–L326. The segment covering A57–A68 has biased composition (low complexity). Over residues A69–P84 the composition is skewed to basic and acidic residues. Residues A98–S138 show a composition bias toward low complexity. Composition is skewed to pro residues over residues A139–K169 and P193–P207. The span at R236 to G296 shows a compositional bias: gly residues. The segment covering R300–K309 has biased composition (basic residues). The tr-type G domain occupies T421–L592. Residues G430 to T437 form a G1 region. G430–T437 serves as a coordination point for GTP. Residues G455–H459 are G2. Residues D480–G483 form a G3 region. Residues D480–H484 and N534–D537 contribute to the GTP site. Residues N534 to D537 are G4. The interval S570–K572 is G5.

The protein belongs to the TRAFAC class translation factor GTPase superfamily. Classic translation factor GTPase family. IF-2 subfamily.

It localises to the cytoplasm. In terms of biological role, one of the essential components for the initiation of protein synthesis. Protects formylmethionyl-tRNA from spontaneous hydrolysis and promotes its binding to the 30S ribosomal subunits. Also involved in the hydrolysis of GTP during the formation of the 70S ribosomal complex. The chain is Translation initiation factor IF-2 from Mycolicibacterium paratuberculosis (strain ATCC BAA-968 / K-10) (Mycobacterium paratuberculosis).